Here is a 501-residue protein sequence, read N- to C-terminus: Monocarboxylate transporter 1 (501 aa).

At Met-1–Val-22 the chain is on the cytoplasmic side. The chain crosses the membrane as a helical span at residues Val-23 to Phe-44. Lys-38 contacts (S)-lactate. At Lys-45 to Thr-55 the chain is on the extracellular side. A helical membrane pass occupies residues Ser-56 to Val-80. The Cytoplasmic portion of the chain corresponds to Asn-81–Gly-84. Residues Ser-85 to Phe-105 form a helical membrane-spanning segment. Topologically, residues Cys-106–Val-109 are extracellular. Residues Gln-110–Leu-132 form a helical membrane-spanning segment. At Thr-133–Ala-146 the chain is on the cytoplasmic side. The chain crosses the membrane as a helical span at residues Asn-147–Phe-169. Over Met-170–Trp-174 the chain is Extracellular. Residues Arg-175–Leu-194 form a helical membrane-spanning segment. The Cytoplasmic portion of the chain corresponds to Met-195–Arg-261. Residues Lys-201–Gly-236 are disordered. Phosphoserine is present on residues Ser-210, Ser-213, and Ser-227. Thr-231 carries the post-translational modification Phosphothreonine. Residues Gly-262–Gly-288 form a helical membrane-spanning segment. Residues Lys-289–Ser-295 lie on the Extracellular side of the membrane. A helical transmembrane segment spans residues Glu-296–Gly-317. H(+) is bound at residue Asp-309. Arg-313 provides a ligand contact to (S)-lactate. At Leu-318–Arg-328 the chain is on the cytoplasmic side. A helical transmembrane segment spans residues Val-329 to Leu-349. Over Ser-350–Tyr-353 the chain is Extracellular. Residues Ile-354–Phe-375 form a helical membrane-spanning segment. The Cytoplasmic portion of the chain corresponds to Glu-376–Ser-389. Residues Ala-390–Gly-410 traverse the membrane as a helical segment. Over Arg-411–Tyr-421 the chain is Extracellular. Residues Thr-422–Ile-443 form a helical membrane-spanning segment. Residues Asn-444–Val-501 are Cytoplasmic-facing. Positions Ala-454 to Val-501 are disordered. Ser-462 is modified (phosphoserine). Thr-467 carries the post-translational modification Phosphothreonine. Ser-484 and Ser-499 each carry phosphoserine.

It belongs to the major facilitator superfamily. Monocarboxylate porter (TC 2.A.1.13) family. Interacts with BSG; interaction mediates SLC16A1 targeting to the plasma membrane. Interacts with EMB; interaction mediates SLC16A1 targeting to the plasma membrane.

Its subcellular location is the cell membrane. The protein resides in the basolateral cell membrane. The protein localises to the apical cell membrane. It catalyses the reaction (S)-lactate(in) + H(+)(in) = (S)-lactate(out) + H(+)(out). The enzyme catalyses acetate(out) + H(+)(out) = acetate(in) + H(+)(in). The catalysed reaction is acetoacetate(out) + H(+)(out) = acetoacetate(in) + H(+)(in). It carries out the reaction pyruvate(out) + H(+)(out) = pyruvate(in) + H(+)(in). It catalyses the reaction (R)-3-hydroxybutanoate(out) + H(+)(out) = (R)-3-hydroxybutanoate(in) + H(+)(in). The enzyme catalyses 3-methyl-2-oxobutanoate(out) + H(+)(out) = 3-methyl-2-oxobutanoate(in) + H(+)(in). The catalysed reaction is 4-methyl-2-oxopentanoate(out) + H(+)(out) = 4-methyl-2-oxopentanoate(in) + H(+)(in). It carries out the reaction succinate(in) + 2 H(+)(in) = succinate(out) + 2 H(+)(out). In terms of biological role, bidirectional proton-coupled monocarboxylate transporter. Catalyzes the rapid transport across the plasma membrane of many monocarboxylates such as lactate, pyruvate, acetate and the ketone bodies acetoacetate and beta-hydroxybutyrate, and thus contributes to the maintenance of intracellular pH. The transport direction is determined by the proton motive force and the concentration gradient of the substrate monocarboxylate. MCT1 is a major lactate exporter. Plays a role in cellular responses to a high-fat diet by modulating the cellular levels of lactate and pyruvate that contribute to the regulation of central metabolic pathways and insulin secretion, with concomitant effects on plasma insulin levels and blood glucose homeostasis. Facilitates the protonated monocarboxylate form of succinate export, that its transient protonation upon muscle cell acidification in exercising muscle and ischemic heart. Functions via alternate outward- and inward-open conformation states. Protonation and deprotonation of 309-Asp is essential for the conformational transition. In Bos taurus (Bovine), this protein is Monocarboxylate transporter 1 (SLC16A1).